A 119-amino-acid polypeptide reads, in one-letter code: Ribosome-binding factor A (119 aa).

This sequence belongs to the RbfA family. As to quaternary structure, monomer. Binds 30S ribosomal subunits, but not 50S ribosomal subunits or 70S ribosomes.

The protein resides in the cytoplasm. Functionally, one of several proteins that assist in the late maturation steps of the functional core of the 30S ribosomal subunit. Associates with free 30S ribosomal subunits (but not with 30S subunits that are part of 70S ribosomes or polysomes). Required for efficient processing of 16S rRNA. May interact with the 5'-terminal helix region of 16S rRNA. The polypeptide is Ribosome-binding factor A (Limosilactobacillus reuteri (strain DSM 20016) (Lactobacillus reuteri)).